The primary structure comprises 60 residues: Metallothionein B (60 aa).

Residues 1 to 28 are beta; the sequence is MDPCECSKSGTCNCGGSCTCTNCSCTSC. The a divalent metal cation site is built by Cys4, Cys6, Cys12, Cys14, Cys18, Cys20, Cys23, Cys25, Cys28, Cys32, Cys33, Cys35, Cys36, Cys40, Cys43, Cys47, Cys49, Cys54, Cys58, and Cys59. The alpha stretch occupies residues 29–60; sequence KKSCCPCCPSGCTKCASGCVCKGKTCDTSCCQ.

This sequence belongs to the metallothionein superfamily. Type 1 family.

Its function is as follows. Metallothioneins have a high content of cysteine residues that bind various heavy metals. This chain is Metallothionein B (mtb), found in Trematomus bernacchii (Emerald rockcod).